Consider the following 142-residue polypeptide: Large ribosomal subunit protein uL13 (142 aa).

This sequence belongs to the universal ribosomal protein uL13 family. Part of the 50S ribosomal subunit.

Its function is as follows. This protein is one of the early assembly proteins of the 50S ribosomal subunit, although it is not seen to bind rRNA by itself. It is important during the early stages of 50S assembly. The chain is Large ribosomal subunit protein uL13 from Proteus mirabilis (strain HI4320).